Consider the following 288-residue polypeptide: Diaminopimelate epimerase (288 aa).

Substrate is bound by residues Asn13, Gln46, and Asn66. Cys75 acts as the Proton donor in catalysis. Substrate-binding positions include 76-77, Asn166, Asn199, and 217-218; these read GN and ER. The active-site Proton acceptor is the Cys226. 227–228 is a binding site for substrate; sequence GT.

The protein belongs to the diaminopimelate epimerase family. Homodimer.

It is found in the cytoplasm. It carries out the reaction (2S,6S)-2,6-diaminopimelate = meso-2,6-diaminopimelate. It participates in amino-acid biosynthesis; L-lysine biosynthesis via DAP pathway; DL-2,6-diaminopimelate from LL-2,6-diaminopimelate: step 1/1. In terms of biological role, catalyzes the stereoinversion of LL-2,6-diaminopimelate (L,L-DAP) to meso-diaminopimelate (meso-DAP), a precursor of L-lysine and an essential component of the bacterial peptidoglycan. In Cupriavidus necator (strain ATCC 17699 / DSM 428 / KCTC 22496 / NCIMB 10442 / H16 / Stanier 337) (Ralstonia eutropha), this protein is Diaminopimelate epimerase.